A 301-amino-acid polypeptide reads, in one-letter code: NADH-ubiquinone oxidoreductase chain 1 (301 aa).

A run of 8 helical transmembrane segments spans residues 4–24 (IIPI…VLGY), 62–82 (LALF…MWIP), 96–116 (ILFM…SGWA), 140–160 (LAII…STLI), 165–185 (YTWL…STIA), 216–236 (LFFL…IILF), 247–267 (EMYT…FLWI), and 279–299 (LMHL…MWHV).

The protein belongs to the complex I subunit 1 family.

The protein resides in the mitochondrion inner membrane. The catalysed reaction is a ubiquinone + NADH + 5 H(+)(in) = a ubiquinol + NAD(+) + 4 H(+)(out). Functionally, core subunit of the mitochondrial membrane respiratory chain NADH dehydrogenase (Complex I) that is believed to belong to the minimal assembly required for catalysis. Complex I functions in the transfer of electrons from NADH to the respiratory chain. The immediate electron acceptor for the enzyme is believed to be ubiquinone. The protein is NADH-ubiquinone oxidoreductase chain 1 (MT-ND1) of Nyctalus noctula (Noctule bat).